We begin with the raw amino-acid sequence, 56 residues long: Protein SspF (56 aa).

This sequence belongs to the alpha/beta-type SASP family.

Its function is as follows. May play some important role in either sporulation or the dormant spore. This Priestia megaterium (strain ATCC 12872 / QMB1551) (Bacillus megaterium) protein is Protein SspF (sspF).